A 334-amino-acid polypeptide reads, in one-letter code: Holliday junction branch migration complex subunit RuvB (334 aa).

The segment at 1–182 is large ATPase domain (RuvB-L); it reads MDERLVSSEA…FGVMSRLEYY (182 aa). ATP-binding positions include leucine 21, arginine 22, glycine 63, lysine 66, threonine 67, threonine 68, 129–131, arginine 172, tyrosine 182, and arginine 219; that span reads EDF. A Mg(2+)-binding site is contributed by threonine 67. The segment at 183-253 is small ATPAse domain (RuvB-S); it reads TQEELADIVT…ISQNALERLQ (71 aa). Residues 256–334 form a head domain (RuvB-H) region; sequence RLGLDHIDHK…HFQMEAPRYD (79 aa). 2 residues coordinate DNA: arginine 311 and arginine 316.

The protein belongs to the RuvB family. As to quaternary structure, homohexamer. Forms an RuvA(8)-RuvB(12)-Holliday junction (HJ) complex. HJ DNA is sandwiched between 2 RuvA tetramers; dsDNA enters through RuvA and exits via RuvB. An RuvB hexamer assembles on each DNA strand where it exits the tetramer. Each RuvB hexamer is contacted by two RuvA subunits (via domain III) on 2 adjacent RuvB subunits; this complex drives branch migration. In the full resolvosome a probable DNA-RuvA(4)-RuvB(12)-RuvC(2) complex forms which resolves the HJ. Homohexamer which interacts with RecU.

The protein resides in the cytoplasm. The catalysed reaction is ATP + H2O = ADP + phosphate + H(+). The RuvA-RuvB-RuvC complex processes Holliday junction (HJ) DNA during genetic recombination and DNA repair, while the RuvA-RuvB complex plays an important role in the rescue of blocked DNA replication forks via replication fork reversal (RFR). RuvA specifically binds to HJ cruciform DNA, conferring on it an open structure. The RuvB hexamer acts as an ATP-dependent pump, pulling dsDNA into and through the RuvAB complex. RuvB forms 2 homohexamers on either side of HJ DNA bound by 1 or 2 RuvA tetramers; 4 subunits per hexamer contact DNA at a time. Coordinated motions by a converter formed by DNA-disengaged RuvB subunits stimulates ATP hydrolysis and nucleotide exchange. Immobilization of the converter enables RuvB to convert the ATP-contained energy into a lever motion, pulling 2 nucleotides of DNA out of the RuvA tetramer per ATP hydrolyzed, thus driving DNA branch migration. The RuvB motors rotate together with the DNA substrate, which together with the progressing nucleotide cycle form the mechanistic basis for DNA recombination by continuous HJ branch migration. Branch migration allows RuvC to scan DNA until it finds its consensus sequence, where it cleaves and resolves cruciform DNA. The chain is Holliday junction branch migration complex subunit RuvB from Bacillus subtilis (strain 168).